The sequence spans 367 residues: Outer membrane protein P2 (367 aa).

The signal sequence occupies residues 1-20; sequence MKKTLAALIVGAFAASAANA.

Belongs to the Gram-negative porin family. In terms of assembly, homotrimer.

The protein localises to the cell outer membrane. Forms pores that allow passive diffusion of small molecules across the outer membrane. The sequence is that of Outer membrane protein P2 (ompP2) from Haemophilus influenzae.